Consider the following 463-residue polypeptide: Putative F-box protein At3g29830 (463 aa).

The F-box domain occupies 7–55 (RDRISSLPDVVLVMILSFLSFKDNVKTSILSKRWRNICYEAKNISFKES).

This is Putative F-box protein At3g29830 from Arabidopsis thaliana (Mouse-ear cress).